Consider the following 87-residue polypeptide: Transcriptional regulator PINT87aa (87 aa).

Interacts with PAF1 complex member PAF1. Interacts with transcription factor FOXM1. Expressed in brain, liver, kidney and stomach with lower levels in breast, intestine, thyroid and pancreas.

It localises to the nucleus. Enhances the binding of the PAF1 complex to target gene promoters and plays a role in negative regulation of transcription. May function as an anchor to keep the PAF1 complex on target gene promoters, sequentially pausing RNA polymerase II-induced mRNA elongation. Inhibits FOXM1-mediated transcription of PHB2. The polypeptide is Transcriptional regulator PINT87aa (Homo sapiens (Human)).